A 396-amino-acid chain; its full sequence is Elongation factor Tu (396 aa).

The tr-type G domain occupies 10 to 205 (KPHVNIGTIG…AVDESIPDPV (196 aa)). The G1 stretch occupies residues 19–26 (GHVDHGKT). A GTP-binding site is contributed by 19-26 (GHVDHGKT). Residue threonine 26 participates in Mg(2+) binding. A G2 region spans residues 62-66 (GITIN). The tract at residues 83-86 (DAPG) is G3. Residues 83–87 (DAPGH) and 138–141 (NKAD) contribute to the GTP site. Residues 138-141 (NKAD) are G4. Residues 175 to 177 (SAL) form a G5 region.

Belongs to the TRAFAC class translation factor GTPase superfamily. Classic translation factor GTPase family. EF-Tu/EF-1A subfamily. As to quaternary structure, monomer.

It is found in the cytoplasm. The catalysed reaction is GTP + H2O = GDP + phosphate + H(+). GTP hydrolase that promotes the GTP-dependent binding of aminoacyl-tRNA to the A-site of ribosomes during protein biosynthesis. The chain is Elongation factor Tu from Mycobacterium bovis (strain ATCC BAA-935 / AF2122/97).